Consider the following 277-residue polypeptide: Large ribosomal subunit protein uL2 (277 aa).

The interval 199–277 is disordered; it reads DHGNINDGKA…ILRSRHQRKS (79 aa).

Belongs to the universal ribosomal protein uL2 family. In terms of assembly, part of the 50S ribosomal subunit. Forms a bridge to the 30S subunit in the 70S ribosome.

In terms of biological role, one of the primary rRNA binding proteins. Required for association of the 30S and 50S subunits to form the 70S ribosome, for tRNA binding and peptide bond formation. It has been suggested to have peptidyltransferase activity; this is somewhat controversial. Makes several contacts with the 16S rRNA in the 70S ribosome. The chain is Large ribosomal subunit protein uL2 from Mesorhizobium japonicum (strain LMG 29417 / CECT 9101 / MAFF 303099) (Mesorhizobium loti (strain MAFF 303099)).